The sequence spans 396 residues: 8-amino-7-oxononanoate synthase (396 aa).

A substrate-binding site is contributed by Arg-19. 106-107 (GY) contacts pyridoxal 5'-phosphate. His-131 is a binding site for substrate. Pyridoxal 5'-phosphate is bound by residues Ser-176, His-204, and Thr-233. Residue Lys-236 is modified to N6-(pyridoxal phosphate)lysine. Residue Thr-350 participates in substrate binding.

This sequence belongs to the class-II pyridoxal-phosphate-dependent aminotransferase family. BioF subfamily. In terms of assembly, homodimer. Pyridoxal 5'-phosphate serves as cofactor.

The enzyme catalyses 6-carboxyhexanoyl-[ACP] + L-alanine + H(+) = (8S)-8-amino-7-oxononanoate + holo-[ACP] + CO2. Its pathway is cofactor biosynthesis; biotin biosynthesis. Its function is as follows. Catalyzes the decarboxylative condensation of pimeloyl-[acyl-carrier protein] and L-alanine to produce 8-amino-7-oxononanoate (AON), [acyl-carrier protein], and carbon dioxide. This Pseudomonas syringae pv. syringae (strain B728a) protein is 8-amino-7-oxononanoate synthase.